We begin with the raw amino-acid sequence, 152 residues long: Transcriptional regulator MraZ (152 aa).

SpoVT-AbrB domains are found at residues 5-52 (HSNR…PMPE) and 81-124 (ATEV…DQGR).

This sequence belongs to the MraZ family. As to quaternary structure, forms oligomers.

It localises to the cytoplasm. Its subcellular location is the nucleoid. This Solidesulfovibrio magneticus (strain ATCC 700980 / DSM 13731 / RS-1) (Desulfovibrio magneticus) protein is Transcriptional regulator MraZ.